The following is an 85-amino-acid chain: RNA-binding protein Hfq (85 aa).

In terms of domain architecture, Sm spans 10 to 70; the sequence is DAFLNQVRKE…ISTIIPQRPV (61 aa).

It belongs to the Hfq family. As to quaternary structure, homohexamer.

Functionally, RNA chaperone that binds small regulatory RNA (sRNAs) and mRNAs to facilitate mRNA translational regulation in response to envelope stress, environmental stress and changes in metabolite concentrations. Also binds with high specificity to tRNAs. The polypeptide is RNA-binding protein Hfq (Carboxydothermus hydrogenoformans (strain ATCC BAA-161 / DSM 6008 / Z-2901)).